Consider the following 438-residue polypeptide: Trigger factor (438 aa).

Residues 160–245 (DDKVTIDFVG…VKKIQQAELP (86 aa)) form the PPIase FKBP-type domain.

It belongs to the FKBP-type PPIase family. Tig subfamily.

The protein resides in the cytoplasm. It catalyses the reaction [protein]-peptidylproline (omega=180) = [protein]-peptidylproline (omega=0). In terms of biological role, involved in protein export. Acts as a chaperone by maintaining the newly synthesized protein in an open conformation. Functions as a peptidyl-prolyl cis-trans isomerase. In Francisella tularensis subsp. novicida (strain U112), this protein is Trigger factor.